Reading from the N-terminus, the 306-residue chain is Dioxygenase FrzG (306 aa).

Fe cation contacts are provided by histidine 132, aspartate 134, and histidine 216.

Belongs to the PhyH family. As to quaternary structure, homodimer. Requires Fe cation as cofactor.

It catalyses the reaction (1S,4S)-4-[(4-methoxyphenyl)methyl]-2-methyl-2,5-diazaspiro[bicyclo[3.2.1]octane-6,1'-cyclohexan]-4'-one + 2-oxoglutarate + O2 = (2S)-3-(4-methoxyphenyl)-2-[(3S)-3-(methylamino)-8-oxo-1-azaspiro[4.5]decan-1-yl]propanal + succinate + CO2. It functions in the pathway secondary metabolite biosynthesis. Its function is as follows. Dioxygenase; part of the gene cluster that mediates the biosynthesis of the alkaloid (-)-FR901483, a potent immunosuppressant that shows efficacy in animal models and a probable inhibitor of purine nucleotide biosynthesis by targeting phosphoribosylpyrophosphate amidotransferase (PPAT). Within the pathway, FrzG cleaves the C9-N10' bond to yield a conjugated iminium. FrzG is also able to catalyze the dehydrogenation between C7 and C8 which leads to a shunt product. The biosynthesis of (-)-FR901483 starts with the condensation of two L-tyrosines to yield (S,S)-dityrosyl-piperazine. This process occurs in 3 steps with the non-canonical nonribosomal peptide synthetase FrzA catalyzing the reduction of L-tyrosine into L-tyrosinal, the spontaneous condensation of 2 L-tyrosinal units, and the subsequent reduction by the NmrA-like family domain-containing oxidoreductase FrzB. The cytochrome P450 monooxygenase FrzC then performs coupling between N10 and C1' to morph the piperazine into a 1,4-diazabicyclo[3.2.1]octane spiro-fused to a 2,5-cyclohexadienone. The dienone portion is further reduced to cyclohexanone by the flavin-dependent reductase FrzD. The methyltranserases (MTs) FrzE and FrzF are then involved in the methylation at the C10' amine and the C4 phenolic oxygen, respectively. The order of the two MTs appear to be interchangeable. Cleavage of the C9-N10' bond by the dioxygenase FrzG then leads to formation of a conjugated iminium. In addition to the oxidation of C9, an additional dehydrogenation between C7 and C8 can occur to give a likely shunt product. The next biosynthetic step is the intramolecular aldol condensation catalyzed by the newly identified aldolase FrzH to yield an aza-tricyclic product with the formation of a C9-C3' bond. The short-chain dehydrogenase/reductase FrzI then produces dephospho-(-)-FR901483 that is phosphorylated at C4'-OH into (-)-FR901483 by the phosphotransferase FrzJ. The sequence is that of Dioxygenase FrzG from Cladobotryum sp.